A 227-amino-acid chain; its full sequence is Cytidylate kinase (227 aa).

11–19 (GPSGAGKGT) is an ATP binding site.

The protein belongs to the cytidylate kinase family. Type 1 subfamily.

The protein resides in the cytoplasm. The enzyme catalyses CMP + ATP = CDP + ADP. It catalyses the reaction dCMP + ATP = dCDP + ADP. In Pasteurella multocida (strain Pm70), this protein is Cytidylate kinase.